Consider the following 190-residue polypeptide: GTP cyclohydrolase 1 (190 aa).

Residues cysteine 75, histidine 78, and cysteine 146 each contribute to the Zn(2+) site.

Belongs to the GTP cyclohydrolase I family. Toroid-shaped homodecamer, composed of two pentamers of five dimers.

The enzyme catalyses GTP + H2O = 7,8-dihydroneopterin 3'-triphosphate + formate + H(+). Its pathway is cofactor biosynthesis; 7,8-dihydroneopterin triphosphate biosynthesis; 7,8-dihydroneopterin triphosphate from GTP: step 1/1. This chain is GTP cyclohydrolase 1, found in Campylobacter jejuni (strain RM1221).